Reading from the N-terminus, the 98-residue chain is Small ribosomal subunit protein bS6 (98 aa).

This sequence belongs to the bacterial ribosomal protein bS6 family.

Its function is as follows. Binds together with bS18 to 16S ribosomal RNA. This is Small ribosomal subunit protein bS6 from Moorella thermoacetica (strain ATCC 39073 / JCM 9320).